A 255-amino-acid polypeptide reads, in one-letter code: Thiazole synthase (255 aa).

Lys95 serves as the catalytic Schiff-base intermediate with DXP. 1-deoxy-D-xylulose 5-phosphate-binding positions include Gly156, 182–183, and 204–205; these read AG and NT.

It belongs to the ThiG family. Homotetramer. Forms heterodimers with either ThiH or ThiS.

Its subcellular location is the cytoplasm. The catalysed reaction is [ThiS sulfur-carrier protein]-C-terminal-Gly-aminoethanethioate + 2-iminoacetate + 1-deoxy-D-xylulose 5-phosphate = [ThiS sulfur-carrier protein]-C-terminal Gly-Gly + 2-[(2R,5Z)-2-carboxy-4-methylthiazol-5(2H)-ylidene]ethyl phosphate + 2 H2O + H(+). Its pathway is cofactor biosynthesis; thiamine diphosphate biosynthesis. Its function is as follows. Catalyzes the rearrangement of 1-deoxy-D-xylulose 5-phosphate (DXP) to produce the thiazole phosphate moiety of thiamine. Sulfur is provided by the thiocarboxylate moiety of the carrier protein ThiS. In vitro, sulfur can be provided by H(2)S. This chain is Thiazole synthase, found in Vibrio campbellii (strain ATCC BAA-1116).